A 205-amino-acid chain; its full sequence is Urease accessory protein UreG (205 aa).

11-18 is a GTP binding site; the sequence is GPVGSGKT.

The protein belongs to the SIMIBI class G3E GTPase family. UreG subfamily. As to quaternary structure, homodimer. UreD, UreF and UreG form a complex that acts as a GTP-hydrolysis-dependent molecular chaperone, activating the urease apoprotein by helping to assemble the nickel containing metallocenter of UreC. The UreE protein probably delivers the nickel.

The protein localises to the cytoplasm. Functionally, facilitates the functional incorporation of the urease nickel metallocenter. This process requires GTP hydrolysis, probably effectuated by UreG. This is Urease accessory protein UreG from Prochlorococcus marinus (strain NATL1A).